We begin with the raw amino-acid sequence, 339 residues long: Dihydroorotase (339 aa).

The Zn(2+) site is built by histidine 12 and histidine 14. Residues 14 to 16 (HVR) and asparagine 40 contribute to the substrate site. Zn(2+) contacts are provided by lysine 94, histidine 133, histidine 167, and aspartate 239. At lysine 94 the chain carries N6-carboxylysine. A substrate-binding site is contributed by histidine 133. The active site involves aspartate 239. Substrate-binding residues include histidine 243 and alanine 255.

It belongs to the metallo-dependent hydrolases superfamily. DHOase family. Class II DHOase subfamily. In terms of assembly, homodimer. The cofactor is Zn(2+).

The catalysed reaction is (S)-dihydroorotate + H2O = N-carbamoyl-L-aspartate + H(+). The protein operates within pyrimidine metabolism; UMP biosynthesis via de novo pathway; (S)-dihydroorotate from bicarbonate: step 3/3. Functionally, catalyzes the reversible cyclization of carbamoyl aspartate to dihydroorotate. In Helicobacter pylori (strain ATCC 700392 / 26695) (Campylobacter pylori), this protein is Dihydroorotase.